The chain runs to 503 residues: Probable cytosol aminopeptidase (503 aa).

The Mn(2+) site is built by Lys270 and Asp275. The active site involves Lys282. Positions 293, 352, and 354 each coordinate Mn(2+). The active site involves Arg356.

This sequence belongs to the peptidase M17 family. The cofactor is Mn(2+).

It is found in the cytoplasm. The catalysed reaction is Release of an N-terminal amino acid, Xaa-|-Yaa-, in which Xaa is preferably Leu, but may be other amino acids including Pro although not Arg or Lys, and Yaa may be Pro. Amino acid amides and methyl esters are also readily hydrolyzed, but rates on arylamides are exceedingly low.. The enzyme catalyses Release of an N-terminal amino acid, preferentially leucine, but not glutamic or aspartic acids.. In terms of biological role, presumably involved in the processing and regular turnover of intracellular proteins. Catalyzes the removal of unsubstituted N-terminal amino acids from various peptides. The protein is Probable cytosol aminopeptidase of Salmonella agona (strain SL483).